The chain runs to 324 residues: tRNA N6-adenosine threonylcarbamoyltransferase (324 aa).

Positions 107, 111, and 127 each coordinate Fe cation. Substrate is bound by residues 127–131, D159, G172, E176, and N257; that span reads YVSGG. D285 contacts Fe cation.

Belongs to the KAE1 / TsaD family. As to quaternary structure, monomer. Component of the KEOPS complex that consists of Kae1, Bud32, Cgi121 and Pcc1; the whole complex dimerizes. It depends on Fe(2+) as a cofactor.

The protein localises to the cytoplasm. It carries out the reaction L-threonylcarbamoyladenylate + adenosine(37) in tRNA = N(6)-L-threonylcarbamoyladenosine(37) in tRNA + AMP + H(+). In terms of biological role, required for the formation of a threonylcarbamoyl group on adenosine at position 37 (t(6)A37) in tRNAs that read codons beginning with adenine. Is a component of the KEOPS complex that is probably involved in the transfer of the threonylcarbamoyl moiety of threonylcarbamoyl-AMP (TC-AMP) to the N6 group of A37. Kae1 likely plays a direct catalytic role in this reaction, but requires other protein(s) of the complex to fulfill this activity. This Pyrococcus horikoshii (strain ATCC 700860 / DSM 12428 / JCM 9974 / NBRC 100139 / OT-3) protein is tRNA N6-adenosine threonylcarbamoyltransferase.